We begin with the raw amino-acid sequence, 171 residues long: NADH-quinone oxidoreductase subunit B (171 aa).

[4Fe-4S] cluster-binding residues include Cys39, Cys40, Cys105, and Cys134.

The protein belongs to the complex I 20 kDa subunit family. In terms of assembly, NDH-1 is composed of 14 different subunits. Subunits NuoB, C, D, E, F, and G constitute the peripheral sector of the complex. Requires [4Fe-4S] cluster as cofactor.

The protein resides in the cell inner membrane. It carries out the reaction a quinone + NADH + 5 H(+)(in) = a quinol + NAD(+) + 4 H(+)(out). Its function is as follows. NDH-1 shuttles electrons from NADH, via FMN and iron-sulfur (Fe-S) centers, to quinones in the respiratory chain. The immediate electron acceptor for the enzyme in this species is believed to be ubiquinone. Couples the redox reaction to proton translocation (for every two electrons transferred, four hydrogen ions are translocated across the cytoplasmic membrane), and thus conserves the redox energy in a proton gradient. In Aliarcobacter butzleri (strain RM4018) (Arcobacter butzleri), this protein is NADH-quinone oxidoreductase subunit B.